Here is a 244-residue protein sequence, read N- to C-terminus: 7-cyano-7-deazaguanine synthase (244 aa).

14–24 serves as a coordination point for ATP; sequence FSGGQDSATCV. Positions 202, 217, 220, and 223 each coordinate Zn(2+).

Belongs to the QueC family. Zn(2+) serves as cofactor.

The enzyme catalyses 7-carboxy-7-deazaguanine + NH4(+) + ATP = 7-cyano-7-deazaguanine + ADP + phosphate + H2O + H(+). It participates in purine metabolism; 7-cyano-7-deazaguanine biosynthesis. Functionally, catalyzes the ATP-dependent conversion of 7-carboxy-7-deazaguanine (CDG) to 7-cyano-7-deazaguanine (preQ(0)). In Burkholderia vietnamiensis (strain G4 / LMG 22486) (Burkholderia cepacia (strain R1808)), this protein is 7-cyano-7-deazaguanine synthase.